A 574-amino-acid polypeptide reads, in one-letter code: Efflux pump FUB11 (574 aa).

The segment at M1 to V44 is disordered. The segment covering S9–E30 has biased composition (polar residues). N19 carries N-linked (GlcNAc...) asparagine glycosylation. 11 helical membrane-spanning segments follow: residues V116–A136, F148–I168, F176–M196, M208–G228, W235–I255, I318–F338, I348–A368, A394–A414, I419–L439, I449–F469, and W484–Y504. Residues H552 to V574 are disordered.

Belongs to the major facilitator superfamily. DHA1 family. Polyamines/proton antiporter (TC 2.A.1.2.16) subfamily.

Its subcellular location is the cell membrane. Its function is as follows. Efflux pump involved in export of fusaric acid, a mycotoxin with low to moderate toxicity to animals and humans, but with high phytotoxic properties. Constitutes a self-protecting mechanism of the fungus against critical levels of fusaric acid within the cell. The protein is Efflux pump FUB11 of Gibberella fujikuroi (strain CBS 195.34 / IMI 58289 / NRRL A-6831) (Bakanae and foot rot disease fungus).